A 435-amino-acid polypeptide reads, in one-letter code: S-phase entry cyclin-5 (435 aa).

Disordered regions lie at residues 36-70 (KRAL…NPLS) and 104-126 (NDRT…DAAS). Over residues 41-52 (KNDSSSKQQVQD) the composition is skewed to low complexity. Positions 110-124 (EQEEEEEEEGEDDDA) are enriched in acidic residues.

This sequence belongs to the cyclin family. Cyclin AB subfamily.

In terms of biological role, required for efficient progression through S phase and possibly for the normal progression through meiosis. Interacts with CDC28. The protein is S-phase entry cyclin-5 (CLB5) of Saccharomyces cerevisiae (strain ATCC 204508 / S288c) (Baker's yeast).